A 288-amino-acid polypeptide reads, in one-letter code: Glucose-1-phosphate thymidylyltransferase (288 aa).

Gly8 is a dTDP-alpha-D-glucose binding site. Residues Gly8, Gly11, Thr12, Arg13, Lys23, Gln24, Gln80, Gly85, and Asp108 each coordinate dTTP. Residues Lys23, Gln24, Gln80, Gly85, Asp108, Asn109, Gly143, Glu158, Lys159, Val169, and Asp222 each coordinate dTDP-alpha-D-glucose. Residue Asp108 participates in Mg(2+) binding. Asp222 contacts Mg(2+).

This sequence belongs to the glucose-1-phosphate thymidylyltransferase family. Requires Mg(2+) as cofactor.

The enzyme catalyses dTTP + alpha-D-glucose 1-phosphate + H(+) = dTDP-alpha-D-glucose + diphosphate. It functions in the pathway carbohydrate biosynthesis; dTDP-L-rhamnose biosynthesis. Functionally, catalyzes the conversion of glucose-1-phosphate and dTTP to dTDP-glucose and pyrophosphate. Involved in the biosynthesis of the dTDP-L-rhamnose which is a component of the critical linker, D-N-acetylglucosamine-L-rhamnose disaccharide, which connects the galactan region of arabinogalactan to peptidoglycan via a phosphodiester linkage. The protein is Glucose-1-phosphate thymidylyltransferase (rmlA) of Mycolicibacterium smegmatis (strain ATCC 700084 / mc(2)155) (Mycobacterium smegmatis).